A 115-amino-acid chain; its full sequence is NADH-ubiquinone oxidoreductase chain 3 (115 aa).

3 helical membrane-spanning segments follow: residues 3–23 (IMITLFINMSLASLLVLIAFW), 55–75 (FFLVAITFLLFDLEIALLLPL), and 87–107 (MLTTALVLILLLALGLAYEWL).

This sequence belongs to the complex I subunit 3 family. Core subunit of respiratory chain NADH dehydrogenase (Complex I) which is composed of 45 different subunits. Interacts with TMEM186. Interacts with TMEM242.

The protein resides in the mitochondrion inner membrane. The catalysed reaction is a ubiquinone + NADH + 5 H(+)(in) = a ubiquinol + NAD(+) + 4 H(+)(out). Core subunit of the mitochondrial membrane respiratory chain NADH dehydrogenase (Complex I) which catalyzes electron transfer from NADH through the respiratory chain, using ubiquinone as an electron acceptor. Essential for the catalytic activity of complex I. This Dasypus novemcinctus (Nine-banded armadillo) protein is NADH-ubiquinone oxidoreductase chain 3.